Reading from the N-terminus, the 463-residue chain is Digalactosyldiacylglycerol synthase 2, chloroplastic (463 aa).

An N-terminal signal peptide occupies residues Met-1 to Ala-22.

This sequence belongs to the glycosyltransferase group 1 family. Glycosyltransferase 4 subfamily. As to expression, high expression in nodules infected cells, and low in nodule and root vascular tissue.

The protein resides in the plastid. It is found in the chloroplast outer membrane. Its subcellular location is the plastid outer membrane. It carries out the reaction a 1,2-diacyl-3-O-(beta-D-galactosyl)-sn-glycerol + UDP-alpha-D-galactose = a 1,2-diacyl-3-O-[alpha-D-galactosyl-(1-&gt;6)-beta-D-galactosyl]-sn-glycerol + UDP + H(+). Functionally, involved in the synthesis of diacylglycerol galactolipids that are specifically found in thylakoid and in nodule peribacteroid membranes. Specific for alpha-glycosidic linkages. The sequence is that of Digalactosyldiacylglycerol synthase 2, chloroplastic from Lotus japonicus (Lotus corniculatus var. japonicus).